The sequence spans 1503 residues: ATP-binding cassette sub-family C member 6 (1503 aa).

At M1–F31 the chain is on the extracellular side. N15 is a glycosylation site (N-linked (GlcNAc...) asparagine). The chain crosses the membrane as a helical span at residues L32–L52. The Cytoplasmic segment spans residues L53 to K72. Residues M73–K93 traverse the membrane as a helical segment. Topologically, residues I94–T98 are extracellular. The helical transmembrane segment at P99–V119 threads the bilayer. Residues F120–Q131 are Cytoplasmic-facing. A helical membrane pass occupies residues S132–T149. Topologically, residues N150 to H167 are extracellular. A helical membrane pass occupies residues L168 to D188. Residues Q189 to A302 lie on the Cytoplasmic side of the membrane. A helical transmembrane segment spans residues I303–V323. The ABC transmembrane type-1 1 domain occupies F311–Q593. The Extracellular portion of the chain corresponds to F324–G349. The chain crosses the membrane as a helical span at residues Y350–N370. Residues M371–Y426 are Cytoplasmic-facing. The chain crosses the membrane as a helical span at residues L427–L447. Topologically, residues L448–P450 are extracellular. The chain crosses the membrane as a helical span at residues S451 to K471. The Cytoplasmic segment spans residues K472 to S533. A helical membrane pass occupies residues V534 to H554. Topologically, residues T555 to N575 are extracellular. Residues I576–V596 traverse the membrane as a helical segment. Residues S597–L939 lie on the Cytoplasmic side of the membrane. The ABC transporter 1 domain occupies I629 to Q853. G663–S670 is an ATP binding site. Residues A854–P919 form a disordered region. The segment covering R881–T901 has biased composition (basic and acidic residues). Residues R940 to A960 traverse the membrane as a helical segment. Residues C947–N1228 enclose the ABC transmembrane type-1 2 domain. Over S961–L997 the chain is Extracellular. A helical membrane pass occupies residues Q998–R1018. Residues L1019–D1061 lie on the Cytoplasmic side of the membrane. Residues K1062 to V1082 traverse the membrane as a helical segment. Position 1083 (A1083) is a topological domain, extracellular. Residues T1084–L1104 traverse the membrane as a helical segment. At Y1105–V1175 the chain is on the cytoplasmic side. The chain crosses the membrane as a helical span at residues E1176–H1196. Residues L1197–S1198 are Extracellular-facing. A helical membrane pass occupies residues A1199–V1219. The Cytoplasmic segment spans residues V1220–V1503. The 235-residue stretch at I1265–E1499 folds into the ABC transporter 2 domain. A Phosphoserine modification is found at S1286. Residue G1299–S1306 coordinates ATP.

It belongs to the ABC transporter superfamily. ABCC family. Conjugate transporter (TC 3.A.1.208) subfamily. Requires Mg(2+) as cofactor. In terms of processing, glycosylated. In terms of tissue distribution, expressed in kidney and liver. Very low expression in other tissues. In testis, localized to peritubular myoid cells, Leydig cells, along the basal membrane of Sertoli cells and moderately in the adluminal compartment of the seminiferous tubules.

Its subcellular location is the basal cell membrane. The protein resides in the basolateral cell membrane. It localises to the endoplasmic reticulum membrane. The enzyme catalyses an S-substituted glutathione(in) + ATP + H2O = an S-substituted glutathione(out) + ADP + phosphate + H(+). It carries out the reaction leukotriene C4(in) + ATP + H2O = leukotriene C4(out) + ADP + phosphate + H(+). Its activity is regulated as follows. LTC4 transport is completely inhibited by 1 mM orthovanadate. ATP-dependent transporter of the ATP-binding cassette (ABC) family that actively extrudes physiological compounds, and xenobiotics from cells. Mediates ATP-dependent transport of glutathione conjugates such as leukotriene-c4 (LTC4) and N-ethylmaleimide S-glutathione (NEM-GS) (in vitro), and an anionic cyclopentapeptide endothelin antagonist, BQ-123. May contribute to regulate the transport of organic compounds in testes across the blood-testis-barrier. Does not appear to actively transport drugs outside the cell. Confers low levels of cellular resistance to etoposide, teniposide, anthracyclines and cisplatin. In terms of biological role, mediates the release of nucleoside triphosphates, predominantly ATP, into the circulation, where it is rapidly converted into AMP and the mineralization inhibitor inorganic pyrophosphate (PPi) by the ecto-enzyme ectonucleotide pyrophosphatase phosphodiesterase 1 (ENPP1), therefore playing a role in PPi homeostasis. Functionally, inhibits TNF-alpha-mediated apoptosis through blocking one or more caspases. The chain is ATP-binding cassette sub-family C member 6 (ABCC6) from Homo sapiens (Human).